The primary structure comprises 100 residues: Large ribosomal subunit protein mL53 (100 aa).

The protein belongs to the mitochondrion-specific ribosomal protein mL53 family. In terms of assembly, component of the mitochondrial large ribosomal subunit (mt-LSU). Mature yeast 74S mitochondrial ribosomes consist of a small (37S) and a large (54S) subunit. The 37S small subunit contains a 15S ribosomal RNA (15S mt-rRNA) and at least 32 different proteins. The 54S large subunit contains a 21S rRNA (21S mt-rRNA) and at least 45 different proteins.

Its subcellular location is the mitochondrion. Its function is as follows. Component of the mitochondrial ribosome (mitoribosome), a dedicated translation machinery responsible for the synthesis of mitochondrial genome-encoded proteins, including at least some of the essential transmembrane subunits of the mitochondrial respiratory chain. The mitoribosomes are attached to the mitochondrial inner membrane and translation products are cotranslationally integrated into the membrane. In Schizosaccharomyces pombe (strain 972 / ATCC 24843) (Fission yeast), this protein is Large ribosomal subunit protein mL53 (mrpl44).